We begin with the raw amino-acid sequence, 201 residues long: 3-isopropylmalate dehydratase small subunit (201 aa).

This sequence belongs to the LeuD family. LeuD type 1 subfamily. In terms of assembly, heterodimer of LeuC and LeuD.

It catalyses the reaction (2R,3S)-3-isopropylmalate = (2S)-2-isopropylmalate. It functions in the pathway amino-acid biosynthesis; L-leucine biosynthesis; L-leucine from 3-methyl-2-oxobutanoate: step 2/4. Its function is as follows. Catalyzes the isomerization between 2-isopropylmalate and 3-isopropylmalate, via the formation of 2-isopropylmaleate. The chain is 3-isopropylmalate dehydratase small subunit from Klebsiella pneumoniae (strain 342).